We begin with the raw amino-acid sequence, 300 residues long: MSYRELVVELAREHAEALSDALLELGALSVSVEDADADTPDEQPLFGEPGLVPDRTAWQRSRVIALLSPDHEPAVLLAAAVNDIGVTETPKFDVREVEEQDWVRLTQSQFEPIPIGERIWVVPSWHDAPDPDALILELDPGLAFGTGSHPTTRLCMEWLEQSVKPGQSVLDYGCGSGILAILARKCGANPVVGIDIDPQAVESARQNSERNHAEVTYGLPDACPAGEFDIVVANILSNPLKLMASMLASKVKPGGRIALSGVLARQADEVAAVYARYVDISVWREHEGWVCLAGTRRESH.

Residues T152, G173, D195, and N234 each coordinate S-adenosyl-L-methionine.

The protein belongs to the methyltransferase superfamily. PrmA family.

The protein resides in the cytoplasm. The enzyme catalyses L-lysyl-[protein] + 3 S-adenosyl-L-methionine = N(6),N(6),N(6)-trimethyl-L-lysyl-[protein] + 3 S-adenosyl-L-homocysteine + 3 H(+). In terms of biological role, methylates ribosomal protein L11. The protein is Ribosomal protein L11 methyltransferase of Burkholderia ambifaria (strain ATCC BAA-244 / DSM 16087 / CCUG 44356 / LMG 19182 / AMMD) (Burkholderia cepacia (strain AMMD)).